The primary structure comprises 55 residues: MFYIHLENTFDLSSTILVKLPEAYAIFDPIVDVMPIIPLFFFLLAFVWQASVSFR.

Residues 1-18 (MFYIHLENTFDLSSTILV) constitute a propeptide that is removed on maturation. The chain crosses the membrane as a helical span at residues 26–46 (IFDPIVDVMPIIPLFFFLLAF).

Belongs to the PsbK family. PSII is composed of 1 copy each of membrane proteins PsbA, PsbB, PsbC, PsbD, PsbE, PsbF, PsbH, PsbI, PsbJ, PsbK, PsbL, PsbM, PsbT, PsbX, PsbY, PsbZ, Psb30/Ycf12, at least 3 peripheral proteins of the oxygen-evolving complex and a large number of cofactors. It forms dimeric complexes.

The protein resides in the plastid. It is found in the chloroplast thylakoid membrane. Functionally, one of the components of the core complex of photosystem II (PSII). PSII is a light-driven water:plastoquinone oxidoreductase that uses light energy to abstract electrons from H(2)O, generating O(2) and a proton gradient subsequently used for ATP formation. It consists of a core antenna complex that captures photons, and an electron transfer chain that converts photonic excitation into a charge separation. The sequence is that of Photosystem II reaction center protein K from Anthoceros angustus (Hornwort).